The following is a 148-amino-acid chain: SLKGDDIIKGLYDLWKITKPNTLLLSIGLIFSLIGTSFSLYIPLIIRNALNKSSLSTDKIVIIIICFGLTLIFSGVSTYILGYIGQKIIQNIRSVTWNKVIKLPYSFHLKNSASNLTSRLVNDTMNITRVFSVEFIFSYSITNIFIYN.

Residues leucine 25–asparagine 148 form the ABC transmembrane type-1 domain. 3 helical membrane-spanning segments follow: residues serine 26–isoleucine 46, isoleucine 60–isoleucine 80, and isoleucine 127–tyrosine 147.

Its subcellular location is the cell membrane. This is an uncharacterized protein from Staphylococcus epidermidis.